Consider the following 1397-residue polypeptide: Probable cyclin-dependent serine/threonine-protein kinase DDB_G0292550 (1397 aa).

One can recognise a Protein kinase domain in the interval 4-287 (FQIIELIGSG…TKEALNHPWF (284 aa)). ATP is bound by residues 10–18 (IGSGSYGKV) and Lys-33. Asp-124 (proton acceptor) is an active-site residue. Disordered regions lie at residues 412 to 567 (NNNN…NNNN), 671 to 728 (PLSI…NNGF), 763 to 831 (NEMG…NGNN), 845 to 949 (NNNN…YANH), 996 to 1101 (NGLA…NTHN), 1115 to 1174 (NNGF…NSPV), 1227 to 1324 (NSAS…SFGL), and 1340 to 1397 (KKKK…IVLD). The span at 676–715 (SQHHNTSSSDTHNNNNNNYNNNNNNNNNINNNNINSIHNQ) shows a compositional bias: low complexity. Composition is skewed to low complexity over residues 845–941 (NNNN…NGNG), 1012–1021 (NSNNNNSGNN), 1028–1101 (NTFN…NTHN), and 1115–1155 (NNGF…TKNN). Positions 1156–1171 (TQFGPNILSSTQTSHN) are enriched in polar residues. Low complexity-rich tracts occupy residues 1253–1321 (NNNN…NNNS) and 1354–1380 (SSSQ…SQTQ).

The protein belongs to the protein kinase superfamily. CMGC Ser/Thr protein kinase family. CDC2/CDKX subfamily.

It carries out the reaction L-seryl-[protein] + ATP = O-phospho-L-seryl-[protein] + ADP + H(+). The enzyme catalyses L-threonyl-[protein] + ATP = O-phospho-L-threonyl-[protein] + ADP + H(+). The sequence is that of Probable cyclin-dependent serine/threonine-protein kinase DDB_G0292550 from Dictyostelium discoideum (Social amoeba).